Here is a 385-residue protein sequence, read N- to C-terminus: Lipid-A-disaccharide synthase 2 (385 aa).

It belongs to the LpxB family.

The catalysed reaction is a lipid X + a UDP-2-N,3-O-bis[(3R)-3-hydroxyacyl]-alpha-D-glucosamine = a lipid A disaccharide + UDP + H(+). The protein operates within bacterial outer membrane biogenesis; LPS lipid A biosynthesis. In terms of biological role, condensation of UDP-2,3-diacylglucosamine and 2,3-diacylglucosamine-1-phosphate to form lipid A disaccharide, a precursor of lipid A, a phosphorylated glycolipid that anchors the lipopolysaccharide to the outer membrane of the cell. The sequence is that of Lipid-A-disaccharide synthase 2 from Legionella pneumophila subsp. pneumophila (strain Philadelphia 1 / ATCC 33152 / DSM 7513).